The chain runs to 427 residues: 3-phosphoshikimate 1-carboxyvinyltransferase (427 aa).

Residues Lys-20, Ser-21, and Arg-25 each coordinate 3-phosphoshikimate. Lys-20 provides a ligand contact to phosphoenolpyruvate. Residues Gly-92 and Arg-120 each contribute to the phosphoenolpyruvate site. The 3-phosphoshikimate site is built by Ser-166, Gln-168, Asp-312, and Lys-339. Gln-168 provides a ligand contact to phosphoenolpyruvate. The active-site Proton acceptor is Asp-312. Arg-343 and Arg-385 together coordinate phosphoenolpyruvate.

It belongs to the EPSP synthase family. As to quaternary structure, monomer.

It is found in the cytoplasm. It catalyses the reaction 3-phosphoshikimate + phosphoenolpyruvate = 5-O-(1-carboxyvinyl)-3-phosphoshikimate + phosphate. It functions in the pathway metabolic intermediate biosynthesis; chorismate biosynthesis; chorismate from D-erythrose 4-phosphate and phosphoenolpyruvate: step 6/7. Its function is as follows. Catalyzes the transfer of the enolpyruvyl moiety of phosphoenolpyruvate (PEP) to the 5-hydroxyl of shikimate-3-phosphate (S3P) to produce enolpyruvyl shikimate-3-phosphate and inorganic phosphate. The protein is 3-phosphoshikimate 1-carboxyvinyltransferase of Streptococcus pneumoniae serotype 19F (strain G54).